The primary structure comprises 336 residues: MDFDAVLLLSFGGPEGPEQVRPFLENVTRGRGVPPERLDHVAEHYLHFGGVSPINGINRALIEQLRAAQALPVYFGNRNWEPYVEDTVKVMRDNGIRRAAVFTTSAWSGYSSCTQYVEDIARARAAAGPGAPELVKLRPYFDHPLFVEMFAGAIADAAAKVPAGARLVFTAHSVPVAADERVGPRLYSRQVAYAARLVAAAAGYAEHDLVWQSRSGPPQVRWLEPDVADHLRALAESGTPAVIVCPIGFVADHIEVVWDLDEELRAQAESAGMLMARASTPNAQPRFARLAADLIDELRCGRTPARVTGPDPVPGCLASVNGAPCRPPHCAAQATG.

2 residues coordinate Fe-coproporphyrin III: Ser52 and Tyr116. Residues His172 and Glu255 each contribute to the Fe(2+) site.

The protein belongs to the ferrochelatase family.

Its subcellular location is the cytoplasm. It catalyses the reaction Fe-coproporphyrin III + 2 H(+) = coproporphyrin III + Fe(2+). The protein operates within porphyrin-containing compound metabolism; protoheme biosynthesis. Functionally, involved in coproporphyrin-dependent heme b biosynthesis. Catalyzes the insertion of ferrous iron into coproporphyrin III to form Fe-coproporphyrin III. The sequence is that of Coproporphyrin III ferrochelatase from Mycobacterium avium (strain 104).